Consider the following 68-residue polypeptide: Large ribosomal subunit protein bL32 (68 aa).

The segment at Met1–Gly25 is disordered.

Belongs to the bacterial ribosomal protein bL32 family.

In Dinoroseobacter shibae (strain DSM 16493 / NCIMB 14021 / DFL 12), this protein is Large ribosomal subunit protein bL32.